Here is a 185-residue protein sequence, read N- to C-terminus: Ribosome-recycling factor (185 aa).

This sequence belongs to the RRF family.

Its subcellular location is the cytoplasm. Responsible for the release of ribosomes from messenger RNA at the termination of protein biosynthesis. May increase the efficiency of translation by recycling ribosomes from one round of translation to another. The chain is Ribosome-recycling factor from Frankia casuarinae (strain DSM 45818 / CECT 9043 / HFP020203 / CcI3).